Reading from the N-terminus, the 316-residue chain is Tyrosine recombinase XerD (316 aa).

The Core-binding (CB) domain occupies Ala4–Val97. Positions Arg118–Ala309 constitute a Tyr recombinase domain. Residues Arg162, Lys186, His261, Arg264, and His287 contribute to the active site. The active-site O-(3'-phospho-DNA)-tyrosine intermediate is Tyr296.

This sequence belongs to the 'phage' integrase family. XerD subfamily. As to quaternary structure, forms a cyclic heterotetrameric complex composed of two molecules of XerC and two molecules of XerD.

The protein localises to the cytoplasm. Its function is as follows. Site-specific tyrosine recombinase, which acts by catalyzing the cutting and rejoining of the recombining DNA molecules. The XerC-XerD complex is essential to convert dimers of the bacterial chromosome into monomers to permit their segregation at cell division. It also contributes to the segregational stability of plasmids. The polypeptide is Tyrosine recombinase XerD (Mycobacterium leprae (strain TN)).